The primary structure comprises 576 residues: Pentatricopeptide repeat-containing protein At1g79080, chloroplastic (576 aa).

A chloroplast-targeting transit peptide spans 1–37; that stretch reads MSTLLNSVLSMASPESSPRKAVGFVSHIPSGFLHFSS. 13 PPR repeats span residues 105-139, 140-174, 175-209, 210-244, 245-279, 280-314, 315-349, 352-386, 387-417, 422-456, 457-487, 493-527, and 528-562; these read NVAHSTQLLYDLCKANRLKKAIRVIELMVSSGIIP, DASAYTYLVNQLCKRGNVGYAMQLVEKMEDHGYPS, NTVTYNALVRGLCMLGSLNQSLQFVERLMQKGLAP, NAFTYSFLLEAAYKERGTDEAVKLLDEIIVKGGEP, NLVSYNVLLTGFCKEGRTDDAMALFRELPAKGFKA, NVVSYNILLRCLCCDGRWEEANSLLAEMDGGDRAP, SVVTYNILINSLAFHGRTEQALQVLKEMSKGNHQF, TATSYNPVIARLCKEGKVDLVVKCLDEMIYRRCKP, NEGTYNAIGSLCEHNSKVQEAFYIIQSLSNK, THDFYKSVITSLCRKGNTFAAFQLLYEMTRCGFDP, DAHTYSALIRGLCLEGMFTGAMEVLSIMEES, TVDNFNAMILGLCKIRRTDLAMEVFEMMVEKKRMP, and NETTYAILVEGIAHEDELELAKEVLDELRLRKVIG.

Belongs to the PPR family. P subfamily.

The protein resides in the plastid. Its subcellular location is the chloroplast. This Arabidopsis thaliana (Mouse-ear cress) protein is Pentatricopeptide repeat-containing protein At1g79080, chloroplastic.